The chain runs to 136 residues: Large ribosomal subunit protein uL22 (136 aa).

The protein belongs to the universal ribosomal protein uL22 family. Part of the 50S ribosomal subunit.

Functionally, this protein binds specifically to 23S rRNA; its binding is stimulated by other ribosomal proteins, e.g. L4, L17, and L20. It is important during the early stages of 50S assembly. It makes multiple contacts with different domains of the 23S rRNA in the assembled 50S subunit and ribosome. In terms of biological role, the globular domain of the protein is located near the polypeptide exit tunnel on the outside of the subunit, while an extended beta-hairpin is found that lines the wall of the exit tunnel in the center of the 70S ribosome. The protein is Large ribosomal subunit protein uL22 of Parabacteroides distasonis (strain ATCC 8503 / DSM 20701 / CIP 104284 / JCM 5825 / NCTC 11152).